Consider the following 538-residue polypeptide: Carboxypeptidase 2 (538 aa).

A signal peptide spans 1–21 (MVAYRFLTLISLGLGSHCVSA). A glycan (N-linked (GlcNAc...) asparagine) is linked at asparagine 46. The tract at residues 53–76 (PAFTSPGTVSRGFSDGTSGPTRDE) is disordered. A Peptidase M14 domain is found at 71 to 351 (GPTRDETMEG…VMAKSVLQTA (281 aa)). Positions 136, 139, and 224 each coordinate Zn(2+). The active-site Proton donor/acceptor is the glutamate 322. N-linked (GlcNAc...) asparagine glycosylation is found at asparagine 393 and asparagine 459.

The protein belongs to the peptidase M14 family. It depends on Zn(2+) as a cofactor.

It is found in the secreted. Its function is as follows. Extracellular metalloprotease that contributes to pathogenicity. The sequence is that of Carboxypeptidase 2 (MCPB) from Trichophyton rubrum (Athlete's foot fungus).